The following is a 496-amino-acid chain: MFCHLRPMRRLCLEKIFPHWFPFSRALSGAEAVNALRPFYFAVHPDFFGQHPVEREINENSLKRLSVYLENLQKPGFKSLKPTQLTFYVRETDQSSSDGQEPFSTSGFRAVKFTLHTRDLLSTVLYILNSCSLSVEHIQSLNTNMHTQPLKEAKRMPDRPIKWDKSYYSFTGFKDPDEDLEQVSRVETTLTSWLDNNGKSAVKKLKNSLPLRKELDRLKDELSHQLQLSDIRWQRSWGIAHRCSQLHSLSRLAQQNLETLKKAKGCTIIFTDRSGMSAVGHVMLGTMDVHHHWTKLFERLPSYFDLQRRLMILEDQISYLLGGIQVVYIEELQPVLTLEEYYSLLDVFYNRLLKSRILFHPRSLRGLQMILNSDRYAPSLHELGHFNIPTLCDPANLQWFILTKAQQARENMKRKEELKVIENELIQASTKKFSLEKLYKEPSISSIQMVDCCKRLLEQSLPYLHGMHLCISHFYSVMQDGDLCIPWNWKNGEAIK.

Residues 404–437 (KAQQARENMKRKEELKVIENELIQASTKKFSLEK) adopt a coiled-coil conformation.

The protein resides in the mitochondrion. May regulate T-cell apoptosis. The sequence is that of T-cell activation inhibitor, mitochondrial (TCAIM) from Homo sapiens (Human).